Consider the following 35-residue polypeptide: Small toxic polypeptide LdrD (35 aa).

The helical transmembrane segment at F10–N32 threads the bilayer.

It belongs to the Ldr toxic peptide family.

The protein localises to the cell inner membrane. Functionally, toxic component of a type I toxin-antitoxin (TA) system. Overexpression causes rapid cell killing and nucleoid condensation of the host cell. Overexpression induces stress-response and a number of membrane protein genes. May inhibit ATP synthesis due to its insertion in the cell inner membrane. The sequence is that of Small toxic polypeptide LdrD (ldrD) from Escherichia coli (strain K12).